Consider the following 98-residue polypeptide: Large ribosomal subunit protein eL21 (98 aa).

The segment covering 1-24 (MVKKAHSFRRKTRGKLSKHPRRRG) has biased composition (basic residues). The interval 1-27 (MVKKAHSFRRKTRGKLSKHPRRRGLPP) is disordered.

This sequence belongs to the eukaryotic ribosomal protein eL21 family. In terms of assembly, part of the 50S ribosomal subunit.

This Thermococcus kodakarensis (strain ATCC BAA-918 / JCM 12380 / KOD1) (Pyrococcus kodakaraensis (strain KOD1)) protein is Large ribosomal subunit protein eL21.